A 239-amino-acid polypeptide reads, in one-letter code: 4-hydroxy-tetrahydrodipicolinate reductase (239 aa).

NAD(+) is bound by residues 8–13, 78–80, and 102–105; these read GSTGKM, GTT, and SANM. The Proton donor/acceptor role is filled by H134. H135 lines the (S)-2,3,4,5-tetrahydrodipicolinate pocket. K138 acts as the Proton donor in catalysis. 144-145 serves as a coordination point for (S)-2,3,4,5-tetrahydrodipicolinate; sequence GT.

Belongs to the DapB family.

It localises to the cytoplasm. It catalyses the reaction (S)-2,3,4,5-tetrahydrodipicolinate + NAD(+) + H2O = (2S,4S)-4-hydroxy-2,3,4,5-tetrahydrodipicolinate + NADH + H(+). The enzyme catalyses (S)-2,3,4,5-tetrahydrodipicolinate + NADP(+) + H2O = (2S,4S)-4-hydroxy-2,3,4,5-tetrahydrodipicolinate + NADPH + H(+). Its pathway is amino-acid biosynthesis; L-lysine biosynthesis via DAP pathway; (S)-tetrahydrodipicolinate from L-aspartate: step 4/4. Functionally, catalyzes the conversion of 4-hydroxy-tetrahydrodipicolinate (HTPA) to tetrahydrodipicolinate. This is 4-hydroxy-tetrahydrodipicolinate reductase from Rickettsia peacockii (strain Rustic).